We begin with the raw amino-acid sequence, 508 residues long: Steroid 17-alpha-hydroxylase/17,20 lyase (508 aa).

Residue N202 participates in substrate binding. C442 serves as a coordination point for heme.

It belongs to the cytochrome P450 family. The cofactor is heme.

Its subcellular location is the endoplasmic reticulum membrane. The protein resides in the microsome membrane. The enzyme catalyses a C21-steroid + reduced [NADPH--hemoprotein reductase] + O2 = a 17alpha-hydroxy-C21-steroid + oxidized [NADPH--hemoprotein reductase] + H2O + H(+). It carries out the reaction progesterone + reduced [NADPH--hemoprotein reductase] + O2 = 17alpha-hydroxyprogesterone + oxidized [NADPH--hemoprotein reductase] + H2O + H(+). The catalysed reaction is pregnenolone + reduced [NADPH--hemoprotein reductase] + O2 = 17alpha-hydroxypregnenolone + oxidized [NADPH--hemoprotein reductase] + H2O + H(+). It catalyses the reaction 17alpha-hydroxypregnenolone + reduced [NADPH--hemoprotein reductase] + O2 = 3beta-hydroxyandrost-5-en-17-one + acetate + oxidized [NADPH--hemoprotein reductase] + H2O + 2 H(+). It functions in the pathway steroid hormone biosynthesis. Its pathway is steroid biosynthesis; glucocorticoid biosynthesis. Regulated predominantly by intracellular cAMP levels. The 17,20-lyase activity is stimulated by cytochrome b5, which acts as an allosteric effector increasing the Vmax of the lyase activity. Functionally, a cytochrome P450 monooxygenase involved in corticoid and androgen biosynthesis. Catalyzes 17-alpha hydroxylation of C21 steroids, which is common for both pathways. A second oxidative step, required only for androgen synthesis, involves an acyl-carbon cleavage. Hydroxylates pregnenolone to form 17-alpha pregnenolone, followed by the cleavage of the C17-C20 bond to form dehydroepiandrosterone (DHEA). Has 17-alpha hydroxylase activity toward progesterone. The 17-alpha hydroxy intermediates, as part of adrenal glucocorticoids biosynthesis pathway, are precursors of cortisol. Mechanistically, uses molecular oxygen inserting one oxygen atom into a substrate, and reducing the second into a water molecule, with two electrons provided by NADPH via cytochrome P450 reductase (CPR; NADPH-ferrihemoprotein reductase). The polypeptide is Steroid 17-alpha-hydroxylase/17,20 lyase (CYP17A1) (Papio hamadryas ursinus (Chacma baboon)).